The chain runs to 47 residues: MKKVPLNCENCGNRNYNVPKKEGSATRLTLKKYCPRCNAHTVHKESK.

Belongs to the bacterial ribosomal protein bL33 family.

The protein is Large ribosomal subunit protein bL33C of Staphylococcus epidermidis (strain ATCC 35984 / DSM 28319 / BCRC 17069 / CCUG 31568 / BM 3577 / RP62A).